We begin with the raw amino-acid sequence, 803 residues long: MTFNHKKMEPKWQQYWSEHNTFKTTEDKNKDNFYALDMFPYPSGAGLHVGHPEGYTATDILSRMKRMQGKNVLHPIGWDAFGLPAEQYAIDTGNDPEEFTALNIANFTRQIKSLGFSYDWDREINTTDPEYYKWTQWIFEKLYEKGLAYEAEIAVNWCPALGTVLANEEVIDGKSERGGFPVFRKPMRQWMLKITAYADRLLDDLDLVDWPENIKDMQRNWIGRSEGAEVTFKIKDSDETFNVFTTRPDTLFGATYTVFAPEHELIEKITTPEQKEAVEAYKKQVELKSELERTDLAKDKTGVFTGAYAINPINGEEVPIWIADYVLIQYGTGAIMAVPAHDERDFEFAQQFGLNIRPVLEGGDVTKEAFTGDGPHINSDFLNGLAKAEAITAAIDWLEKEGIGSRKITYRLRDWLFSRQRYWGEPIPVIHWEDGETTLVPEDELPLLLPKATEIKPSGTGESPLANLHDWVNVTDKNGRKGRRETNTMPQWAGSSWYFLRYIDPNNSEAIADKEKLAEWLPVDVYIGGAEHAVLHLLYARFWHKFLYDIGVVPTKEPFQKLFNQGMILGENNEKMSKSRGNVVNPDEVVEKYGADTLRLYEMFMGPLEASIAWNENGLEGARKFLDRIWRLLVTEEGTLAEKVTTDANANLEKAYHHMVKTVTNHYENLRFNTGISQLMIFINEAYKQDTIPKQYVEGFVQLLSPIAPHLAEELWEILGHTETISYVAWPTYDETKLVEDEVEIVLQVNGKVKSKITVAKSLEKEELEKIAQEDNKMKENLEGKTIRKVIVVPGKLVNIVAN.

Positions 40–51 match the 'HIGH' region motif; that stretch reads PYPSGAGLHVGH. The short motif at 575-579 is the 'KMSKS' region element; it reads KMSKS. K578 lines the ATP pocket.

Belongs to the class-I aminoacyl-tRNA synthetase family.

The protein localises to the cytoplasm. It catalyses the reaction tRNA(Leu) + L-leucine + ATP = L-leucyl-tRNA(Leu) + AMP + diphosphate. This chain is Leucine--tRNA ligase, found in Listeria monocytogenes serotype 4b (strain F2365).